The chain runs to 245 residues: Tetraspanin-16 (245 aa).

Over 1–13 (MAEIHTPYSSLKK) the chain is Cytoplasmic. The helical transmembrane segment at 14 to 34 (LLSLLNGFVAVSGIILVGLGI) threads the bilayer. Residues 35–37 (GGK) are Extracellular-facing. Residues 38 to 58 (CGGASLTNVLGLSSAYLLHVG) form a helical membrane-spanning segment. Residue Asn59 is a topological domain, cytoplasmic. A helical transmembrane segment spans residues 60–80 (LCLVMGCITVLLGCAGWYGAT). Over 81–94 (KESRGTLLFCILSM) the chain is Extracellular. The chain crosses the membrane as a helical span at residues 95–115 (VIVLIMEVTAATVVLLFFPIV). Topologically, residues 116 to 245 (GDVALEHTFV…VAQAGLELLA (130 aa)) are cytoplasmic.

Belongs to the tetraspanin (TM4SF) family. In terms of tissue distribution, broadly expressed in most human tissues and cell lines including neural and bone marrow derived tissues.

Its subcellular location is the membrane. The sequence is that of Tetraspanin-16 (TSPAN16) from Homo sapiens (Human).